Consider the following 624-residue polypeptide: Glutamine--fructose-6-phosphate aminotransferase [isomerizing] (624 aa).

Cys2 acts as the Nucleophile; for GATase activity in catalysis. Positions 2–226 (CGIVGYVGQQ…QDQAVVLTAD (225 aa)) constitute a Glutamine amidotransferase type-2 domain. SIS domains follow at residues 297 to 436 (SDQE…ARGT) and 469 to 614 (LAQR…VDKP). Lys619 acts as the For Fru-6P isomerization activity in catalysis.

As to quaternary structure, homodimer.

The protein resides in the cytoplasm. It carries out the reaction D-fructose 6-phosphate + L-glutamine = D-glucosamine 6-phosphate + L-glutamate. In terms of biological role, catalyzes the first step in hexosamine metabolism, converting fructose-6P into glucosamine-6P using glutamine as a nitrogen source. This Mycolicibacterium paratuberculosis (strain ATCC BAA-968 / K-10) (Mycobacterium paratuberculosis) protein is Glutamine--fructose-6-phosphate aminotransferase [isomerizing].